The sequence spans 246 residues: MANEACPCPCDIGDKIEYGAKGQEVQIEHIKAYVSKPHSSTDKAVIVVQDIFGWQLPNTRFMADLLTAHGYITICPDFFVGQEPWKPSNDRSTFTEWLQTRQATKVEKEINVVLKYLKEQCHVKKIGVIGFCWGGVVTHHLMLKYPELKAGVSFYGIIRDVEDRYNLLNPTLFIFAEMDHVIPLEQVSLLEEKLKVHSKVDFQVKVFPKQTHGFVHRKNEDINPEDKPFIEEARKNMLEWLHKYIN.

Catalysis depends on residues C132, D179, and H212.

Belongs to the dienelactone hydrolase family.

Its subcellular location is the cytoplasm. The protein localises to the cytosol. In terms of biological role, cysteine hydrolase. The chain is Carboxymethylenebutenolidase homolog (cmbl) from Xenopus tropicalis (Western clawed frog).